Consider the following 118-residue polypeptide: Ribulose bisphosphate carboxylase small subunit (118 aa).

It belongs to the RuBisCO small chain family. As to quaternary structure, heterohexadecamer of 8 large and 8 small subunits.

In terms of biological role, ruBisCO catalyzes two reactions: the carboxylation of D-ribulose 1,5-bisphosphate, the primary event in carbon dioxide fixation, as well as the oxidative fragmentation of the pentose substrate. Both reactions occur simultaneously and in competition at the same active site. Although the small subunit is not catalytic it is essential for maximal activity. The chain is Ribulose bisphosphate carboxylase small subunit from Thiobacillus denitrificans (strain ATCC 25259 / T1).